The following is a 165-amino-acid chain: SPbeta prophage-derived uncharacterized protein YorR (165 aa).

This chain is SPbeta prophage-derived uncharacterized protein YorR (yorR), found in Bacillus subtilis (strain 168).